A 779-amino-acid polypeptide reads, in one-letter code: Transcription activator of gluconeogenesis BDCG_02812 (779 aa).

The interval 1-70 (MTASTRNGSP…NAKDPLRPRR (70 aa)) is disordered. Over residues 25-61 (KSMTTTPANPPETKSQTNGKGSGTAQSSQKPASTSAN) the composition is skewed to polar residues. Residues 77 to 105 (CFACQRAHLTCGDERPCQRCIKRGLQDAC) constitute a DNA-binding region (zn(2)-C6 fungal-type). 6 disordered regions span residues 135 to 163 (QANT…QSVS), 202 to 239 (SVFH…SVSG), 285 to 344 (GAGD…ANPR), 401 to 421 (TNLM…PGLK), 559 to 590 (GSSL…PHTG), and 655 to 732 (FHGK…QTWG). The segment covering 202–226 (SVFHAQSPSSTQNFDLSSNPQTQNL) has biased composition (polar residues). The span at 227-238 (SSAMSQTASSVS) shows a compositional bias: low complexity. Polar residues-rich tracts occupy residues 291–322 (PSDS…NQSP), 333–344 (WNPTGQGQANPR), and 401–416 (TNLM…SRIS). Low complexity predominate over residues 560–572 (SSLSSASSVRGSS). Over residues 573–586 (TFTPRNNNTHNSID) the composition is skewed to polar residues. Residues 672–719 (TGTTTSGDVATTTATGTSTSNGANANTNGNNTNPNDPSSAASSSASSA) are compositionally biased toward low complexity. Positions 720 to 729 (LQGPQQSPRQ) are enriched in polar residues.

It belongs to the ERT1/acuK family.

The protein localises to the nucleus. Transcription factor which regulates nonfermentable carbon utilization. Activator of gluconeogenetic genes. The chain is Transcription activator of gluconeogenesis BDCG_02812 from Ajellomyces dermatitidis (strain ER-3 / ATCC MYA-2586) (Blastomyces dermatitidis).